The primary structure comprises 566 residues: Sodium-dependent high-affinity dicarboxylate transporter 3 (566 aa).

A run of 12 helical transmembrane segments spans residues 55-75 (LVLVLTPLFFGQMLNWEGPEW), 92-112 (VMPLAVTAMLPVVLFPLVGVL), 123-139 (NDTNFLFIGGLIMAAAV), 162-182 (WIMLGFMTVTALLSSFISNTA), 219-239 (MATGLVLSICFAANIGGTGTA), 268-288 (WIFFAYPLMLLCLFVAWMTLV), 329-349 (ILLSLWVFRNPGVVPGFGVFF), 352-372 (GAYTDATSAMIVAFLLFVLPS), 400-420 (ETFPWSVVLLLGGGFALAAGV), 439-459 (LPLWILQLLTMLIAMVITNIC), 496-516 (FAFIFPVGTPPNAIVFGSGMV), and 521-541 (MAFVGGIISLELLVLTVLYMN).

It belongs to the SLC13A/DASS transporter (TC 2.A.47) family. NADC subfamily. As to expression, nad-1 and nad-2 are coexpressed in the intestinal tract from early larvae to adults, expression is from the pharynx through to the anus. Expression level is significantly greater in the anterior half of the intestine than in the posterior half.

The protein localises to the membrane. Its function is as follows. High-affinity sodium-dicarboxylate cotransporter that accepts a range of tricarboxylic acid-cycle intermediates with 4-5 carbon atoms. There is no interaction with monocarboxylates. Plays a role in the regulation of life span. In Caenorhabditis elegans, this protein is Sodium-dependent high-affinity dicarboxylate transporter 3 (nac-3).